We begin with the raw amino-acid sequence, 225 residues long: Glutathione S-transferase-like protein tpcF (225 aa).

Positions Ile-4–His-85 constitute a GST N-terminal domain. The GST C-terminal domain maps to Gly-92–Thr-225.

It belongs to the GST superfamily. In terms of tissue distribution, specifically expressed in conidia.

Its pathway is secondary metabolite biosynthesis. In terms of biological role, glutathione S-transferase-like protein; part of the gene cluster that mediates the biosynthesis of trypacidin, a mycotoxin with antiprotozoal activity and that plays a role in the infection process. The pathway begins with the synthesis of atrochrysone thioester by the polyketide synthase (PKS) tpcC. The atrochrysone carboxyl ACP thioesterase tpcB then breaks the thioester bond and releases the atrochrysone carboxylic acid from tpcC. The decarboxylase tpcK converts atrochrysone carboxylic acid to atrochrysone which is further reduced into emodin anthrone. The next step is performed by the emodin anthrone oxygenase tpcL that catalyzes the oxidation of emodinanthrone to emodin. Emodin O-methyltransferase encoded by tpcA catalyzes methylation of the 8-hydroxy group of emodin to form questin. Ring cleavage of questin by questin oxidase tpcI leads to desmethylsulochrin via several intermediates including questin epoxide. Another methylation step catalyzed by tpcM leads to the formation of sulochrin which is further converted to monomethylsulfochrin by tpcH. Finally, the tpcJ catalyzes the conversion of monomethylsulfochrin to trypacidin. Trypacidin is toxic for human pulmonary and bronchial epithelial cells by initiating the intracellular formation of nitric oxide (NO) and hydrogen peroxide (H(2)O(2)), thus triggering host necrotic cell death. The trypacidin pathway is also able to produce endocrocin via a distinct route from the endocrocin Enc pathway. The chain is Glutathione S-transferase-like protein tpcF from Aspergillus fumigatus (strain ATCC MYA-4609 / CBS 101355 / FGSC A1100 / Af293) (Neosartorya fumigata).